A 186-amino-acid chain; its full sequence is Peptidyl-tRNA hydrolase (186 aa).

Residue Tyr14 coordinates tRNA. The Proton acceptor role is filled by His19. TRNA-binding residues include Tyr64, Asn66, and Asn112.

It belongs to the PTH family. In terms of assembly, monomer.

Its subcellular location is the cytoplasm. The enzyme catalyses an N-acyl-L-alpha-aminoacyl-tRNA + H2O = an N-acyl-L-amino acid + a tRNA + H(+). Functionally, hydrolyzes ribosome-free peptidyl-tRNAs (with 1 or more amino acids incorporated), which drop off the ribosome during protein synthesis, or as a result of ribosome stalling. Catalyzes the release of premature peptidyl moieties from peptidyl-tRNA molecules trapped in stalled 50S ribosomal subunits, and thus maintains levels of free tRNAs and 50S ribosomes. This Bacillus cytotoxicus (strain DSM 22905 / CIP 110041 / 391-98 / NVH 391-98) protein is Peptidyl-tRNA hydrolase.